The primary structure comprises 228 residues: Methyltransferase verB (228 aa).

The protein belongs to the methyltransferase superfamily.

It functions in the pathway secondary metabolite biosynthesis; terpenoid biosynthesis. The protein operates within mycotoxin biosynthesis. Its function is as follows. Methyltransferase; part of the gene cluster that mediates the biosynthesis of the neurotoxin verrucosidin, a methylated alpha-pyrone polyketide that inhibits oxidative phosphorylation in mitochondria and thereby causes neurological diseases. The carbon backbone of verrucosidin is synthesized by the HR-PKS verA, and further modified by the other verrucodidin cluster enzymes. The sequence is that of Methyltransferase verB from Penicillium polonicum.